The following is a 467-amino-acid chain: 3-isopropylmalate dehydratase large subunit (467 aa).

Cys-347, Cys-407, and Cys-410 together coordinate [4Fe-4S] cluster.

It belongs to the aconitase/IPM isomerase family. LeuC type 1 subfamily. Heterodimer of LeuC and LeuD. Requires [4Fe-4S] cluster as cofactor.

The catalysed reaction is (2R,3S)-3-isopropylmalate = (2S)-2-isopropylmalate. It functions in the pathway amino-acid biosynthesis; L-leucine biosynthesis; L-leucine from 3-methyl-2-oxobutanoate: step 2/4. Its function is as follows. Catalyzes the isomerization between 2-isopropylmalate and 3-isopropylmalate, via the formation of 2-isopropylmaleate. The polypeptide is 3-isopropylmalate dehydratase large subunit (Pelagibacter ubique (strain HTCC1062)).